The chain runs to 395 residues: Chorismate synthase (395 aa).

NADP(+) contacts are provided by arginine 40 and arginine 46. Residues 135–137 (RAS) and 256–257 (QA) contribute to the FMN site. The segment covering 272-283 (RRGSQAHDEMRP) has biased composition (basic and acidic residues). Positions 272–296 (RRGSQAHDEMRPGPDGILRSTNRAG) are disordered. FMN is bound by residues glycine 300, 315–319 (KPIST), and arginine 341.

This sequence belongs to the chorismate synthase family. As to quaternary structure, homotetramer. It depends on FMNH2 as a cofactor.

The catalysed reaction is 5-O-(1-carboxyvinyl)-3-phosphoshikimate = chorismate + phosphate. It participates in metabolic intermediate biosynthesis; chorismate biosynthesis; chorismate from D-erythrose 4-phosphate and phosphoenolpyruvate: step 7/7. Catalyzes the anti-1,4-elimination of the C-3 phosphate and the C-6 proR hydrogen from 5-enolpyruvylshikimate-3-phosphate (EPSP) to yield chorismate, which is the branch point compound that serves as the starting substrate for the three terminal pathways of aromatic amino acid biosynthesis. This reaction introduces a second double bond into the aromatic ring system. This chain is Chorismate synthase, found in Rhodococcus jostii (strain RHA1).